Here is a 258-residue protein sequence, read N- to C-terminus: Pyridoxine 5'-phosphate synthase (258 aa).

Asn16 contacts 3-amino-2-oxopropyl phosphate. Residue 18-19 (DH) coordinates 1-deoxy-D-xylulose 5-phosphate. Arg27 lines the 3-amino-2-oxopropyl phosphate pocket. His52 functions as the Proton acceptor in the catalytic mechanism. Residues Arg54 and His59 each coordinate 1-deoxy-D-xylulose 5-phosphate. The Proton acceptor role is filled by Glu79. Position 109 (Thr109) interacts with 1-deoxy-D-xylulose 5-phosphate. His200 (proton donor) is an active-site residue. Residues Gly201 and 222–223 (GH) each bind 3-amino-2-oxopropyl phosphate.

Belongs to the PNP synthase family. In terms of assembly, homooctamer; tetramer of dimers.

The protein localises to the cytoplasm. It catalyses the reaction 3-amino-2-oxopropyl phosphate + 1-deoxy-D-xylulose 5-phosphate = pyridoxine 5'-phosphate + phosphate + 2 H2O + H(+). The protein operates within cofactor biosynthesis; pyridoxine 5'-phosphate biosynthesis; pyridoxine 5'-phosphate from D-erythrose 4-phosphate: step 5/5. Functionally, catalyzes the complicated ring closure reaction between the two acyclic compounds 1-deoxy-D-xylulose-5-phosphate (DXP) and 3-amino-2-oxopropyl phosphate (1-amino-acetone-3-phosphate or AAP) to form pyridoxine 5'-phosphate (PNP) and inorganic phosphate. This is Pyridoxine 5'-phosphate synthase from Burkholderia lata (strain ATCC 17760 / DSM 23089 / LMG 22485 / NCIMB 9086 / R18194 / 383).